A 460-amino-acid chain; its full sequence is UDP-N-acetylmuramoylalanine--D-glutamate ligase (460 aa).

An ATP-binding site is contributed by 120–126 (GSNGKTT).

Belongs to the MurCDEF family.

It localises to the cytoplasm. It carries out the reaction UDP-N-acetyl-alpha-D-muramoyl-L-alanine + D-glutamate + ATP = UDP-N-acetyl-alpha-D-muramoyl-L-alanyl-D-glutamate + ADP + phosphate + H(+). It functions in the pathway cell wall biogenesis; peptidoglycan biosynthesis. Its function is as follows. Cell wall formation. Catalyzes the addition of glutamate to the nucleotide precursor UDP-N-acetylmuramoyl-L-alanine (UMA). In Lactobacillus gasseri (strain ATCC 33323 / DSM 20243 / BCRC 14619 / CIP 102991 / JCM 1131 / KCTC 3163 / NCIMB 11718 / NCTC 13722 / AM63), this protein is UDP-N-acetylmuramoylalanine--D-glutamate ligase.